A 261-amino-acid chain; its full sequence is Cytochrome c oxidase subunit 3 (261 aa).

The Mitochondrial matrix portion of the chain corresponds to 1–15; sequence MTHQTHAYHMVNPSP. A helical membrane pass occupies residues 16 to 34; that stretch reads WPLTGALSALLMTSGLIMW. Topologically, residues 35–40 are mitochondrial intermembrane; the sequence is FHYNSM. Residues 41 to 66 form a helical membrane-spanning segment; sequence ALLTLGFTTNLLTMYQWWRDVIREGT. At 67–72 the chain is on the mitochondrial matrix side; the sequence is FQGHHT. Residues 73–105 traverse the membrane as a helical segment; it reads PIVQKGLRYGMVLFIVSEVFFFAGFFWAFYHSS. The Mitochondrial intermembrane segment spans residues 106–128; it reads LAPTPELGGCWPPTGIIPLNPLE. Residues 129-152 form a helical membrane-spanning segment; sequence VPLLNTSVLLASGVSITWAHHSLM. At 153-155 the chain is on the mitochondrial matrix side; that stretch reads EGN. The helical transmembrane segment at 156–183 threads the bilayer; that stretch reads RKHMLQALFITISLGVYFTLLQASEYYE. Residues 184–190 lie on the Mitochondrial intermembrane side of the membrane; the sequence is TSFTISD. A helical transmembrane segment spans residues 191–223; it reads GVYGSTFFMATGFHGLHVIIGSTFLIVCFLRQL. Residues 224–232 are Mitochondrial matrix-facing; sequence YYHFTSNHH. A helical transmembrane segment spans residues 233 to 256; it reads FGFEAAAWYWHFVDVVWLFLYVSI. At 257-261 the chain is on the mitochondrial intermembrane side; that stretch reads YWWGS.

It belongs to the cytochrome c oxidase subunit 3 family. In terms of assembly, component of the cytochrome c oxidase (complex IV, CIV), a multisubunit enzyme composed of 14 subunits. The complex is composed of a catalytic core of 3 subunits MT-CO1, MT-CO2 and MT-CO3, encoded in the mitochondrial DNA, and 11 supernumerary subunits COX4I, COX5A, COX5B, COX6A, COX6B, COX6C, COX7A, COX7B, COX7C, COX8 and NDUFA4, which are encoded in the nuclear genome. The complex exists as a monomer or a dimer and forms supercomplexes (SCs) in the inner mitochondrial membrane with NADH-ubiquinone oxidoreductase (complex I, CI) and ubiquinol-cytochrome c oxidoreductase (cytochrome b-c1 complex, complex III, CIII), resulting in different assemblies (supercomplex SCI(1)III(2)IV(1) and megacomplex MCI(2)III(2)IV(2)).

It is found in the mitochondrion inner membrane. The enzyme catalyses 4 Fe(II)-[cytochrome c] + O2 + 8 H(+)(in) = 4 Fe(III)-[cytochrome c] + 2 H2O + 4 H(+)(out). Component of the cytochrome c oxidase, the last enzyme in the mitochondrial electron transport chain which drives oxidative phosphorylation. The respiratory chain contains 3 multisubunit complexes succinate dehydrogenase (complex II, CII), ubiquinol-cytochrome c oxidoreductase (cytochrome b-c1 complex, complex III, CIII) and cytochrome c oxidase (complex IV, CIV), that cooperate to transfer electrons derived from NADH and succinate to molecular oxygen, creating an electrochemical gradient over the inner membrane that drives transmembrane transport and the ATP synthase. Cytochrome c oxidase is the component of the respiratory chain that catalyzes the reduction of oxygen to water. Electrons originating from reduced cytochrome c in the intermembrane space (IMS) are transferred via the dinuclear copper A center (CU(A)) of subunit 2 and heme A of subunit 1 to the active site in subunit 1, a binuclear center (BNC) formed by heme A3 and copper B (CU(B)). The BNC reduces molecular oxygen to 2 water molecules using 4 electrons from cytochrome c in the IMS and 4 protons from the mitochondrial matrix. This Canis lupus familiaris (Dog) protein is Cytochrome c oxidase subunit 3 (MT-CO3).